Reading from the N-terminus, the 341-residue chain is Heat-inducible transcription repressor HrcA (341 aa).

The protein belongs to the HrcA family.

Negative regulator of class I heat shock genes (grpE-dnaK-dnaJ and groELS operons). Prevents heat-shock induction of these operons. In Brevibacillus brevis (strain 47 / JCM 6285 / NBRC 100599), this protein is Heat-inducible transcription repressor HrcA.